Consider the following 422-residue polypeptide: Nucleoside transporter 1 (422 aa).

Over Met-1–Leu-38 the chain is Cytoplasmic. The chain crosses the membrane as a helical span at residues Ser-39–Leu-59. Trp-53 is an inosine binding site. At Asn-60–Phe-63 the chain is on the extracellular side. The helical transmembrane segment at Lys-64 to Phe-82 threads the bilayer. Topologically, residues Val-83–Lys-87 are cytoplasmic. The helical transmembrane segment at Ile-88–Ser-107 threads the bilayer. At His-108 to Phe-116 the chain is on the extracellular side. Residues Asp-117–Phe-139 form a helical membrane-spanning segment. Gln-135 contributes to the inosine binding site. Residues Asn-140 to Met-149 are Cytoplasmic-facing. A helical membrane pass occupies residues Gly-150 to Phe-174. The Extracellular portion of the chain corresponds to Val-175–Lys-185. Residues Ala-186 to Cys-208 form a helical membrane-spanning segment. The Cytoplasmic segment spans residues Asn-209–Lys-241. Residues Ala-242–Trp-265 traverse the membrane as a helical segment. At Gln-266–Tyr-274 the chain is on the extracellular side. The chain crosses the membrane as a helical span at residues Asn-275–Pro-294. The inosine site is built by Asp-287 and Arg-291. Topologically, residues Asn-295–Leu-309 are cytoplasmic. Residues Asn-310 to Ala-330 form a helical membrane-spanning segment. Residues Cys-331–Lys-338 lie on the Extracellular side of the membrane. The helical transmembrane segment at Asn-339 to Phe-362 threads the bilayer. Topologically, residues Leu-363–Lys-374 are cytoplasmic. The chain crosses the membrane as a helical span at residues Lys-375–Ile-397. The Extracellular portion of the chain corresponds to Trp-398–Gln-422.

It belongs to the SLC29A/ENT transporter (TC 2.A.57) family.

Its subcellular location is the cell membrane. The enzyme catalyses inosine(in) = inosine(out). It carries out the reaction adenosine(in) = adenosine(out). The catalysed reaction is hypoxanthine(out) = hypoxanthine(in). It catalyses the reaction guanosine(in) = guanosine(out). The enzyme catalyses guanine(out) = guanine(in). It carries out the reaction thymidine(in) = thymidine(out). The catalysed reaction is uridine(out) = uridine(in). It catalyses the reaction uracil(in) = uracil(out). The enzyme catalyses thymine(out) = thymine(in). It carries out the reaction adenine(out) = adenine(in). The catalysed reaction is cytosine(out) = cytosine(in). It catalyses the reaction xanthine(out) = xanthine(in). With respect to regulation, GSK4 (5-methyl-N-[2-(2-oxo-1-azepanyl)ethyl]-2-phenyl-1,3-oxazole-4-carbox-amide) disrupts the transport activity at 500 nM. Inhibited partially by 10 uM dipyridamole. Inhibited partially by N,N'-1,3-benzothiazole-2,6-diyldi(2-furamide), 2-bromo-N-(4-[1,3]oxazolo[4,5-b]pyridin-2-ylphenyl)benzamide, 4-methyl-7-[(3,4,5-trimethoxybenzyl)oxy]-2H-chromen-2-one, 2-(1-methyl-1H-indol-3-yl)-2-oxo-N-[4-(pyrrolidin-1-ylcarbonyl)phenyl]acet amide and 2-[2-(2-methylphenyl)vinyl]-4(3H)-quinazolinone. Sodium-independent nucleoside and nucleobase transporter with a broad substrate specificity. Plays a key role in the utilization of host purine sources by P.falciparum during intraerythrocytic development enabling parasite growth in the presence of physiological concentrations of adenosine, inosine, guanine, guanosine, xanthine and hypoxanthine. Essential for parasite transition from ring to trophozoite or from trophozoite to schizont stage but not for erythrocyte invasion by merozoites. The protein is Nucleoside transporter 1 of Plasmodium falciparum (isolate 3D7).